A 410-amino-acid chain; its full sequence is Aspartate aminotransferase (410 aa).

The L-aspartate site is built by Gly47, Trp135, and Asn185. Lys249 carries the post-translational modification N6-(pyridoxal phosphate)lysine. Residue Arg385 participates in L-aspartate binding.

This sequence belongs to the class-I pyridoxal-phosphate-dependent aminotransferase family. Homodimer. Pyridoxal 5'-phosphate serves as cofactor.

It localises to the cytoplasm. The catalysed reaction is L-aspartate + 2-oxoglutarate = oxaloacetate + L-glutamate. Its function is as follows. Catalyzes the reversible conversion of aspartate and 2-oxoglutarate to glutamate and oxaloacetate. The protein is Aspartate aminotransferase of Rhizobium meliloti (Ensifer meliloti).